A 485-amino-acid polypeptide reads, in one-letter code: MAPTFTNSNGQPIPEPFATQRVGQHGPLLLQDFNLIDSLAHFDRERIPERVVHAKGSGAYGVFEVTDDITDVCAAKFLDTVGKKTRIFTRFSTVGGELGSADTARDPRGFATKFYTEEGNLDLVYNNTPVFFIRDPSKFPHFIHTQKRNPETHLKDANMFWDYLTTNEESVHQVMVLFSDRGTPASYREMNGYSGHTYKWSNNKGEWFYVQVHFISDQGIKTLTNEEAGSLAGSNPDYAQEDLFKNIAAGNYPSWTCYIQTMTEAQAKEAEFSVFDLTKVWPHGKYPMRRFGKFTLNENPKNYFAEVEQAAFSPAHTVPHMEPSADPVLQSRLFSYADTHRHRLGTNYTQIPVNCPVTGAVFNPHMRDGAMNVNGNLGNHPNYLASDKPIEFKQFSLQEDQEVWHGAATPFHWKATPADFKQATELWKVLKKYPNQQEHLAHNVAVHASAADAPIQDRVIAYFTKVHPDLGDLIKKEILELSPRK.

Active-site residues include His53 and Asn126. Tyr336 provides a ligand contact to heme.

It belongs to the catalase family. In terms of assembly, homotetramer. Requires heme as cofactor.

It localises to the peroxisome matrix. It carries out the reaction 2 H2O2 = O2 + 2 H2O. Catalyzes the degradation of hydrogen peroxide (H(2)O(2)) generated by peroxisomal oxidases to water and oxygen, thereby protecting cells from the toxic effects of hydrogen peroxide. This chain is Peroxisomal catalase (POX9), found in Candida tropicalis (Yeast).